We begin with the raw amino-acid sequence, 1048 residues long: MAFPPRRRLRLGPRGLPLLLSGLLLPLCRAFNLDVESPAEYSGPEGSYFGFAVDFFVPSASSRMFLLVGAPKANTTQPGIVEGGQVLKCDWSSHRRCQPIEFDATGNRDYAKDDPLEFKSHQWFGASVRSKQDKILACAPLYHWRTEMKQEREPVGTCFLQDGTKTVEYAPCRSKNIDADGQGFCQGGFSIDFTKADRVLLGGPGSFYWQGQLISDQVAEIVSKYDPKVYSIKYNNQLATRTAQAIFDDSYLGYSVAVGDFNGDGIDDFVSGVPRAARTLGMVYIYDGKNMSSLHNFTGEQMAAYFGFSVAATDINGDDYADVFIGAPLFMDRGSDGKLQEVGQVSVSLQKASGDFQTIKLNGFEVFARFGSAIAPLGDLDQDGFNDIAIAAPYGGEDKKGIVYIFNGRPTGLNAVPSQILEGKWAARSMPPSFGYSMKGATDIDKNGYPDLIVGAFGVDRAVLYRARPVITVNAGLEVYPSILNQENKTCPLPGTDLKVSCFNVRFCLKADGKGALPTKLDFQVELLLDKLKQKGAIRRALFLHNRSPGHSKNMTISRGGQMQCEELIAYLRDESEFRDKLTPITIFMEYWLDYRTAADATGLQPILNQFTPANVSRQAHILLDCGEDNVCKPKLEVSVDSDQKKIYIGDDNPLTLIVKAQNQGEGAYEAELIVSIPLQADFIGVVRNSEALARLSCAFKTENQTRQVVCDLGNPMKAGTQLLAGLRFSVHQQSEMDTSVKFDLQIQSSNLFDKVSPVVSYKVDLAVLAAVEIRGVSSPDHIFLPIPNWKYKENPETEEDVGPVVQHIYELRNNGPSSFSKAMLHLQWPYKYNNNTLLYILQYDIDGPMNCTSDMEINPLRIKISNSQTSEKNDTVGGQGDRNHLITKRDLTLNEGDVHTLGCGIAECLKIVCQVGRLDRGKSAILYVRSLLWTETFMNKENQNHSYSLKSSASFNVIEFPYKNLPIEDIFNSTLVTTNVTWGIQPAPMPVPVWVIILAVLAGLLLLAVLVFVMYRMGFFKRVRPPQEEQEREQLQPHENGEGNSET.

A signal peptide spans 1-30; it reads MAFPPRRRLRLGPRGLPLLLSGLLLPLCRA. The Extracellular segment spans residues 31-992; sequence FNLDVESPAE…WGIQPAPMPV (962 aa). 7 FG-GAP repeats span residues 32–98, 109–170, 173–225, 237–291, 292–357, 358–415, and 419–482; these read NLDV…RRCQ, DYAK…VEYA, RSKN…VSKY, QLAT…GKNM, SSLH…GDFQ, TIKL…GLNA, and QILE…VYPS. N-linked (GlcNAc...) asparagine glycosylation is present at Asn74. Cystine bridges form between Cys89–Cys97, Cys138–Cys158, and Cys172–Cys185. Ca(2+) is bound by residues Asp260, Asn262, Asp264, Ile266, and Asp268. N-linked (GlcNAc...) asparagine glycans are attached at residues Asn290 and Asn296. 15 residues coordinate Ca(2+): Asp314, Asn316, Asp318, Tyr320, Asp322, Asp379, Asp381, Asp383, Phe385, Asp387, Asp443, Asp445, Asn447, Tyr449, and Asp451. Asn488 is a glycosylation site (N-linked (GlcNAc...) asparagine). 2 disulfides stabilise this stretch: Cys491–Cys502 and Cys508–Cys565. N-linked (GlcNAc...) asparagine glycosylation is found at Asn554 and Asn615. Disulfide bonds link Cys626–Cys632 and Cys698–Cys711. Residues Asn704, Asn835, Asn851, and Asn874 are each glycosylated (N-linked (GlcNAc...) asparagine). 2 disulfides stabilise this stretch: Cys852/Cys914 and Cys904/Cys909. Residues Asn945, Asn973, and Asn980 are each glycosylated (N-linked (GlcNAc...) asparagine). The chain crosses the membrane as a helical span at residues 993–1016; that stretch reads PVWVIILAVLAGLLLLAVLVFVMY. Residues 1017–1048 lie on the Cytoplasmic side of the membrane; sequence RMGFFKRVRPPQEEQEREQLQPHENGEGNSET. The GFFKR motif signature appears at 1019–1023; the sequence is GFFKR. A compositionally biased stretch (basic and acidic residues) spans 1027–1042; it reads PQEEQEREQLQPHENG. Positions 1027-1048 are disordered; it reads PQEEQEREQLQPHENGEGNSET.

The protein belongs to the integrin alpha chain family. In terms of assembly, heterodimer of an alpha and a beta subunit. The alpha subunit is composed of a heavy and a light chain linked by a disulfide bond. Alpha-V (ITGAV) associates with either beta-1 (ITGB1), beta-3 (ITGB3), beta-5 (ITGB5), beta-6 (ITGB6) or beta-8 (ITGB8). Interacts with RAB25. Interacts with CIB1. Integrins ITGAV:ITGB3 and ITGAV:ITGB5 interact with FBLN5 (via N-terminus). ITGAV:ITGB3 and ITGAV:ITGB5 interact with CCN3. ITGAV:ITGB3 interacts with ADGRA2. ITGAV:ITGB3 interacts with FGF2; it is likely that FGF2 can simultaneously bind ITGAV:ITGB3 and FGF receptors. ITGAV:ITGB3 interacts with SELP (via C-type lectin domain); the interaction mediates cell-cell interaction and adhesion. ITGAV:ITGB3 is found in a ternary complex with CX3CR1 and CX3CL1. ITGAV:ITGB3 is found in a ternary complex with NRG1 and ERBB3. ITGAV:ITGB3 is found in a ternary complex with FGF1 and FGFR1. ITGAV:ITGB3 is found in a ternary complex with IGF1 and IGF1R. ITGAV:ITGB3 interacts with IGF2. ITGAV:ITGB3 and ITGAV:ITGB6 interact with FBN1. ITGAV:ITGB3 interacts with CD9, CD81 and CD151 (via second extracellular domain). ITGAV:ITGB6 interacts with TGFB1. ITGAV:ITGB3 interacts with PTN. Forms a complex with PTPRZ1 and PTN that stimulates endothelial cell migration through ITGB3 'Tyr-773' phosphorylation. Interacts with TM4SF19. As to quaternary structure, (Microbial infection) Alpha-V/beta-6 and alpha-V/beta-3 bind to foot-and-mouth disease virus (FMDV) VP1 protein and acts as a receptor for this virus.

It localises to the cell membrane. It is found in the cell junction. The protein localises to the focal adhesion. Functionally, the alpha-V (ITGAV) integrins are receptors for vitronectin, cytotactin, fibronectin, fibrinogen, laminin, matrix metalloproteinase-2, osteopontin, osteomodulin, prothrombin, thrombospondin, TGFB1 and vWF. They recognize the sequence R-G-D in a wide array of ligands. Alpha-V integrins may play a role in embryo implantation, angiogenesis and wound healing. ITGAV:ITGB3 binds to fractalkine (CX3CL1) and may act as its coreceptor in CX3CR1-dependent fractalkine signaling. ITGAV:ITGB3 binds to NRG1 (via EGF domain) and this binding is essential for NRG1-ERBB signaling. ITGAV:ITGB3 binds to FGF1 and this binding is essential for FGF1 signaling. ITGAV:ITGB3 binds to FGF2 and this binding is essential for FGF2 signaling. ITGAV:ITGB3 binds to IGF1 and this binding is essential for IGF1 signaling. ITGAV:ITGB3 binds to IGF2 and this binding is essential for IGF2 signaling. ITGAV:ITGB3 binds to IL1B and this binding is essential for IL1B signaling. ITGAV:ITGB3 binds to PLA2G2A via a site (site 2) which is distinct from the classical ligand-binding site (site 1) and this induces integrin conformational changes and enhanced ligand binding to site 1. ITGAV:ITGB3 and ITGAV:ITGB6 act as receptors for fibrillin-1 (FBN1) and mediate R-G-D-dependent cell adhesion to FBN1. Integrin alpha-V/beta-6 or alpha-V/beta-8 (ITGAV:ITGB6 or ITGAV:ITGB8) mediates R-G-D-dependent release of transforming growth factor beta-1 (TGF-beta-1) from regulatory Latency-associated peptide (LAP), thereby playing a key role in TGF-beta-1 activation. ITGAV:ITGB3 acts as a receptor for CD40LG. ITGAV:ITGB3 acts as a receptor for IBSP and promotes cell adhesion and migration to IBSP. The polypeptide is Integrin alpha-V (ITGAV) (Bos taurus (Bovine)).